The primary structure comprises 142 residues: Putative pre-16S rRNA nuclease (142 aa).

It belongs to the YqgF nuclease family.

The protein localises to the cytoplasm. Could be a nuclease involved in processing of the 5'-end of pre-16S rRNA. The chain is Putative pre-16S rRNA nuclease from Lawsonia intracellularis (strain PHE/MN1-00).